The sequence spans 35 residues: Peptide ToHyp2 (35 aa).

Over residues 1–29 (LPKPPLLPPPVPGLAPGLPPLPVPDPVPH) the composition is skewed to pro residues. The segment at 1 to 35 (LPKPPLLPPPVPGLAPGLPPLPVPDPVPHPPKKPP) is disordered. Hydroxyproline occurs at positions 5, 9, 10, 12, 16, 20, 31, and 35.

Post-translationally, O-glycosylated; contains pentose side chains at some or all of the hydroxyproline residues. Glycosylation is required for full antifungal activity.

In terms of biological role, antimicrobial peptide. Inhibits elongation of hyphae in B.sorokiniana (IC(50)=3.8 uM) but has no effect on this process or on germination of conidia in a panel of other phytopathogenic fungi. At concentrations above 10 uM, has antibacterial activity. The sequence is that of Peptide ToHyp2 from Taraxacum officinale (Common dandelion).